Here is a 387-residue protein sequence, read N- to C-terminus: S-adenosylmethionine synthase (387 aa).

Residue His-17 coordinates ATP. Mg(2+) is bound at residue Asp-19. K(+) is bound at residue Glu-45. L-methionine is bound by residues Glu-58 and Gln-101. Residues Gln-101–Arg-111 are flexible loop. ATP contacts are provided by residues Asp-168–Lys-170, Arg-234–Phe-235, Asp-243, Arg-249–Lys-250, Ala-266, and Lys-270. Residue Asp-243 participates in L-methionine binding. Lys-274 is an L-methionine binding site.

This sequence belongs to the AdoMet synthase family. Homotetramer; dimer of dimers. Mg(2+) is required as a cofactor. K(+) serves as cofactor.

Its subcellular location is the cytoplasm. The enzyme catalyses L-methionine + ATP + H2O = S-adenosyl-L-methionine + phosphate + diphosphate. The protein operates within amino-acid biosynthesis; S-adenosyl-L-methionine biosynthesis; S-adenosyl-L-methionine from L-methionine: step 1/1. Its function is as follows. Catalyzes the formation of S-adenosylmethionine (AdoMet) from methionine and ATP. The overall synthetic reaction is composed of two sequential steps, AdoMet formation and the subsequent tripolyphosphate hydrolysis which occurs prior to release of AdoMet from the enzyme. This is S-adenosylmethionine synthase from Bordetella bronchiseptica (strain ATCC BAA-588 / NCTC 13252 / RB50) (Alcaligenes bronchisepticus).